Here is a 455-residue protein sequence, read N- to C-terminus: UDP-N-acetylmuramate--L-alanine ligase (455 aa).

109 to 115 (GTHGKTT) serves as a coordination point for ATP.

This sequence belongs to the MurCDEF family.

It is found in the cytoplasm. The catalysed reaction is UDP-N-acetyl-alpha-D-muramate + L-alanine + ATP = UDP-N-acetyl-alpha-D-muramoyl-L-alanine + ADP + phosphate + H(+). The protein operates within cell wall biogenesis; peptidoglycan biosynthesis. In terms of biological role, cell wall formation. The polypeptide is UDP-N-acetylmuramate--L-alanine ligase (Caldicellulosiruptor bescii (strain ATCC BAA-1888 / DSM 6725 / KCTC 15123 / Z-1320) (Anaerocellum thermophilum)).